The sequence spans 296 residues: Small ribosomal subunit protein uS2 (296 aa).

Positions 246-272 are disordered; it reads QAKDGSVVDSGKGKSIAAHKGGGKASK.

This sequence belongs to the universal ribosomal protein uS2 family.

The polypeptide is Small ribosomal subunit protein uS2 (Anaplasma phagocytophilum (strain HZ)).